The primary structure comprises 380 residues: 1-deoxy-D-xylulose 5-phosphate reductoisomerase (380 aa).

Residues threonine 9, glycine 10, serine 11, valine 12, arginine 36, and asparagine 117 each coordinate NADPH. Lysine 118 contacts 1-deoxy-D-xylulose 5-phosphate. Glutamate 119 contributes to the NADPH binding site. Aspartate 139 is a Mn(2+) binding site. Residues serine 140, glutamate 141, serine 165, and histidine 188 each coordinate 1-deoxy-D-xylulose 5-phosphate. Glutamate 141 lines the Mn(2+) pocket. Glycine 194 lines the NADPH pocket. Positions 201, 206, 207, and 210 each coordinate 1-deoxy-D-xylulose 5-phosphate. Glutamate 210 lines the Mn(2+) pocket.

The protein belongs to the DXR family. Requires Mg(2+) as cofactor. Mn(2+) serves as cofactor.

It carries out the reaction 2-C-methyl-D-erythritol 4-phosphate + NADP(+) = 1-deoxy-D-xylulose 5-phosphate + NADPH + H(+). Its pathway is isoprenoid biosynthesis; isopentenyl diphosphate biosynthesis via DXP pathway; isopentenyl diphosphate from 1-deoxy-D-xylulose 5-phosphate: step 1/6. Its function is as follows. Catalyzes the NADPH-dependent rearrangement and reduction of 1-deoxy-D-xylulose-5-phosphate (DXP) to 2-C-methyl-D-erythritol 4-phosphate (MEP). This Aquifex aeolicus (strain VF5) protein is 1-deoxy-D-xylulose 5-phosphate reductoisomerase.